Here is a 260-residue protein sequence, read N- to C-terminus: UPF0294 protein YPO1077/y3099/YP_2772 (260 aa).

The protein belongs to the UPF0294 family.

Its subcellular location is the cytoplasm. This is UPF0294 protein YPO1077/y3099/YP_2772 from Yersinia pestis.